Here is a 148-residue protein sequence, read N- to C-terminus: SsrA-binding protein (148 aa).

It belongs to the SmpB family.

Its subcellular location is the cytoplasm. In terms of biological role, required for rescue of stalled ribosomes mediated by trans-translation. Binds to transfer-messenger RNA (tmRNA), required for stable association of tmRNA with ribosomes. tmRNA and SmpB together mimic tRNA shape, replacing the anticodon stem-loop with SmpB. tmRNA is encoded by the ssrA gene; the 2 termini fold to resemble tRNA(Ala) and it encodes a 'tag peptide', a short internal open reading frame. During trans-translation Ala-aminoacylated tmRNA acts like a tRNA, entering the A-site of stalled ribosomes, displacing the stalled mRNA. The ribosome then switches to translate the ORF on the tmRNA; the nascent peptide is terminated with the 'tag peptide' encoded by the tmRNA and targeted for degradation. The ribosome is freed to recommence translation, which seems to be the essential function of trans-translation. This is SsrA-binding protein from Ehrlichia ruminantium (strain Gardel).